The chain runs to 302 residues: Capsid protein (302 aa).

The tract at residues 217–302 is disordered; it reads FHSGDAAKQS…HSSPQQTPKK (86 aa). A compositionally biased stretch (low complexity) spans 254-271; the sequence is PRAGTPSSQKSGQSGQTT. Over residues 288–302 the composition is skewed to polar residues; sequence HKSTPHSSPQQTPKK.

The protein resides in the virion. In terms of biological role, capsid protein self-assembles to form a flexuous, filamentous capsid (Potential). The capsid encapsulates the single-stranded RNA genome. This Botryotinia fuckeliana (Noble rot fungus) protein is Capsid protein.